The primary structure comprises 1216 residues: Probable phospholipid-transporting ATPase 4 (1216 aa).

Residues 1–74 lie on the Cytoplasmic side of the membrane; sequence MARGRIRSKL…TTRYNLITFF (74 aa). The helical transmembrane segment at 75–96 threads the bilayer; it reads PKCLYEQFHRAANFYFLVAAIL. At 97-100 the chain is on the extracellular side; the sequence is SVFP. The helical transmembrane segment at 101–123 threads the bilayer; sequence LSPFNKWSMIAPLVFVVGLSMLK. At 124 to 305 the chain is on the cytoplasmic side; the sequence is EALEDWSRFM…SRIEKTMDYI (182 aa). A helical membrane pass occupies residues 306-327; that stretch reads IYTLLVLLILISCISSSGFAWE. Residues 328 to 359 are Extracellular-facing; the sequence is TKFHMPKWWYLRPEEPENLTNPSNPVYAGFVH. The chain crosses the membrane as a helical span at residues 360–377; sequence LITALLLYGYLIPISLYV. The Cytoplasmic portion of the chain corresponds to 378–922; it reads SIEVVKVLQA…HGHWCYKRIA (545 aa). The active-site 4-aspartylphosphate intermediate is the Asp425. Residue Lys605 forms a Glycyl lysine isopeptide (Lys-Gly) (interchain with G-Cter in ubiquitin) linkage. Mg(2+) is bound by residues Asp867 and Asp871. The chain crosses the membrane as a helical span at residues 923 to 942; the sequence is QMICYFFYKNIAFGLTLFYF. Residues 943 to 956 lie on the Extracellular side of the membrane; the sequence is EAFTGFSGQSVYND. A helical transmembrane segment spans residues 957-976; it reads YYLLLFNVVLTSLPVIALGV. The Cytoplasmic segment spans residues 977–1006; sequence FEQDVSSEICLQFPALYQQGKKNLFFDWYR. The chain crosses the membrane as a helical span at residues 1007–1029; sequence ILGWMGNGVYSSLVIFFLNIGII. At 1030–1042 the chain is on the extracellular side; that stretch reads YEQAFRVSGQTAD. The helical transmembrane segment at 1043-1065 threads the bilayer; sequence MDAVGTTMFTCIIWAVNVQIALT. At 1066–1071 the chain is on the cytoplasmic side; it reads VSHFTW. The helical transmembrane segment at 1072–1092 threads the bilayer; the sequence is IQHVLIWGSIGLWYLFVALYG. The Extracellular segment spans residues 1093–1109; that stretch reads MMPPSLSGNIYRILVEI. A helical membrane pass occupies residues 1110 to 1134; that stretch reads LAPAPIYWIATFLVTVTTVLPYFAH. The Cytoplasmic segment spans residues 1135 to 1216; that stretch reads ISFQRFLHPL…TQDTMSPRSV (82 aa). A disordered region spans residues 1195 to 1216; the sequence is LNKKQSNMSQFSTQDTMSPRSV. A compositionally biased stretch (polar residues) spans 1198–1216; that stretch reads KQSNMSQFSTQDTMSPRSV.

The protein belongs to the cation transport ATPase (P-type) (TC 3.A.3) family. Type IV subfamily.

It is found in the membrane. It catalyses the reaction ATP + H2O + phospholipidSide 1 = ADP + phosphate + phospholipidSide 2.. Functionally, involved in transport of phospholipids. This is Probable phospholipid-transporting ATPase 4 from Arabidopsis thaliana (Mouse-ear cress).